Here is a 119-residue protein sequence, read N- to C-terminus: Large ribosomal subunit protein uL18 (119 aa).

The segment at 1–24 is disordered; that stretch reads MITKQDKNQVRKKRHARVRSKISG. Positions 10-20 are enriched in basic residues; sequence VRKKRHARVRS.

The protein belongs to the universal ribosomal protein uL18 family. As to quaternary structure, part of the 50S ribosomal subunit; part of the 5S rRNA/L5/L18/L25 subcomplex. Contacts the 5S and 23S rRNAs.

This is one of the proteins that bind and probably mediate the attachment of the 5S RNA into the large ribosomal subunit, where it forms part of the central protuberance. This Lysinibacillus sphaericus (strain C3-41) protein is Large ribosomal subunit protein uL18.